A 372-amino-acid chain; its full sequence is Cytochrome b (372 aa).

Transmembrane regions (helical) follow at residues 25-45 (FGSM…FLAI), 69-90 (WTMQ…YIHI), 105-125 (WLSG…GYVL), and 170-190 (FFAL…IHII). His-75 and His-89 together coordinate heme b. The heme b site is built by His-174 and His-188. His-193 contributes to the a ubiquinone binding site. The next 4 membrane-spanning stretches (helical) occupy residues 218-238 (YKDI…MAFA), 280-300 (LGGT…PFTH), 312-332 (LAQM…WTAT), and 339-358 (FILI…IINP).

The protein belongs to the cytochrome b family. In terms of assembly, the cytochrome bc1 complex contains 3 respiratory subunits (MT-CYB, CYC1 and UQCRFS1), 2 core proteins (UQCRC1 and UQCRC2) and probably 6 low-molecular weight proteins. Heme b serves as cofactor.

The protein localises to the mitochondrion inner membrane. Its function is as follows. Component of the ubiquinol-cytochrome c reductase complex (complex III or cytochrome b-c1 complex) that is part of the mitochondrial respiratory chain. The b-c1 complex mediates electron transfer from ubiquinol to cytochrome c. Contributes to the generation of a proton gradient across the mitochondrial membrane that is then used for ATP synthesis. The protein is Cytochrome b (MT-CYB) of Acanthophis antarcticus (Common death adder).